Consider the following 630-residue polypeptide: MGDAPLPPGSGKEFTQVQQQHNNYSNHQQQHAFASQYDMTQQQQPFGRGLSGPYNMGLMMHALPHPSYRPGQQQQHQYGSPPNTNGNAQPMPQAHGNNTMNSMPGPPQYYMQQQHGLPPQYYAQQMQGSQQQQQHQRGSMSPRANMALYQQPHTQGQQYYYPQGAQFPNHGPMPQNSMLAGPYPLASHMQHVDHRLAQRQVGDQRDVDNTEQSQPRVDGARFESQSNVVRGPPRKPRQSGHAIWIGNLPPQTDLMSLVYHVCKEAPGLESLFLISKSNCAFANFKDEEACISAQQKIHDSKFQTVRLVSRLRKSTVEGATGLTAPTGPAASAPQSNISQEVKGDALSVVTTTEDLIASSNVSSPKVTSPAPVETDRSAPQKEKYFILKSLTVEDLEQSIKTGIWATQAHNEKALNKAYETAESVYLIFSANKSGEYFGYARMTSQINEDPAAAVEFAPKAQAASDVALPKAIPTEANEYMPKGSIMDDSERGTIFWEADPPEDADGVDSNDTTTAAVADDTVSIKSCETGGPDSKVWGKPFQIEWLSVARLPFYRTRGIRNPWNSNREVKIARDGTELEPSVGRKLTGLFTSRGVGQLQQQPHPHHHHVMGGGMPMPGGMVHGYPPMYAQ.

Disordered regions lie at residues 38–113 (DMTQ…YMQQ), 160–183 (YYPQ…AGPY), and 200–241 (QVGD…QSGH). The segment covering 70 to 102 (PGQQQQHQYGSPPNTNGNAQPMPQAHGNNTMNS) has biased composition (polar residues). A YTH domain is found at 382–590 (EKYFILKSLT…SVGRKLTGLF (209 aa)).

Belongs to the YTHDF family. YTHDF1 subfamily.

The protein resides in the cytoplasm. It localises to the P-body. In terms of biological role, specifically recognizes and binds N6-methyladenosine (m6A)-containing mRNAs, and regulates their stability. M6A is a modification present at internal sites of mRNAs and some non-coding RNAs and plays a role in mRNA stability and processing. Plays a role in pathogenicity towards plant host. The sequence is that of YTH domain-containing family protein 1 from Pyricularia oryzae (strain 70-15 / ATCC MYA-4617 / FGSC 8958) (Rice blast fungus).